The following is a 1582-amino-acid chain: Dynein axonemal assembly factor 1 homolog (1582 aa).

LRR repeat units lie at residues 38–60, 61–82, 83–104, 105–126, 129–150, and 154–175; these read RLNDVLYLHFQGYQCIENLDEYT, ELKSLWLESNAISEIQNLTKLT, KLKCLYLQNNLITKMENLEFNR, ELDTLNLSQNHIRKIENIGTDI, VLNTLNITSNYLTDSASLAALV, and TLSVLDLSNNRIDDILIVKIFE. Positions 189–227 constitute an LRRCT domain; sequence PVVSRLPQYRKTLILACKELTYLDSRPVFPRDRACAEAW. 11 disordered regions span residues 245 to 420, 560 to 587, 859 to 878, 913 to 942, 1073 to 1092, 1101 to 1137, 1150 to 1218, 1305 to 1345, 1358 to 1438, 1484 to 1517, and 1529 to 1548; these read AERR…SEMD, SSDVQEQAKDPSESDEEPTEEEMEVKSQ, FSKDTPESLDAQLAKDEDRR, DTGELEELPPPPELISDSESEKEVEEDDDA, SSNEDLEAKHKSNDDPLVER, MQRMKEHEERARELQEQLEKEKEEENSGPIKLSMGEG, TEII…QAEG, KDNE…TAKD, LDPE…PYQT, EDSKIGDGPTEKFLDQKAQDNTENTDERPENPKN, and PSESLEDTEATETPEVSTEQ. Residues 313–327 show a composition bias toward low complexity; sequence ESQASEHSTTSSTSA. Positions 339-392 are enriched in basic and acidic residues; sequence HIAERISNRRVKPLEGRPKVLYDEAASGDEKAVTTTDSKKDSNAEDLPELKDIT. Positions 409–420 are enriched in polar residues; that stretch reads TLLQSDSGSEMD. Positions 572-582 are enriched in acidic residues; it reads ESDEEPTEEEM. Residues 928–942 show a composition bias toward acidic residues; sequence SDSESEKEVEEDDDA. Basic and acidic residues-rich tracts occupy residues 1078–1092 and 1103–1125; these read LEAKHKSNDDPLVER and RMKEHEERARELQEQLEKEKEEE. Residues 1166–1178 show a composition bias toward low complexity; that stretch reads EGGAQQEEGGAQS. Composition is skewed to basic and acidic residues over residues 1321-1335, 1398-1427, and 1484-1514; these read PKEEHIPEVKSETET, SALKETTEIGDSEKQENKTQDETLDPKDTE, and EDSKIGDGPTEKFLDQKAQDNTENTDERPEN. Over residues 1529–1540 the composition is skewed to acidic residues; it reads PSESLEDTEATE.

The protein belongs to the DNAAF1 family.

Its subcellular location is the cell projection. It is found in the cilium. Cilium-specific protein required for cilia structures. The chain is Dynein axonemal assembly factor 1 homolog (dtr) from Drosophila pseudoobscura pseudoobscura (Fruit fly).